The following is an 880-amino-acid chain: Pentatricopeptide repeat-containing protein At3g07290, mitochondrial (880 aa).

Residues 1–89 (MLLIHIRSTR…RSDNDICVRF (89 aa)) constitute a mitochondrion transit peptide. 19 PPR repeats span residues 159–193 (NYPC…GFVV), 194–228 (GMID…GFVL), 229–259 (DSHI…MSKE), 265–299 (NSVS…GCQP), 300–334 (STRT…GCKP), 335–369 (NVHT…RIFP), 370–404 (SVIT…ACKP), 405–439 (NVRT…GLSP), 440–474 (DIVS…DIEP), 475–509 (DCLT…GISL), 510–544 (DEVT…RILT), 545–579 (TPHS…GLVP), 580–614 (SVVT…GCLP), 615–649 (NVYP…GVSP), 650–684 (NHVT…GYEL), 685–721 (NDRI…ETDP), 738–768 (ISGL…VLER), 772–806 (LEKA…GFVP), and 807–842 (SFKS…GVVE).

It belongs to the PPR family. P subfamily.

Its subcellular location is the mitochondrion. The chain is Pentatricopeptide repeat-containing protein At3g07290, mitochondrial from Arabidopsis thaliana (Mouse-ear cress).